Consider the following 127-residue polypeptide: Fluoride-specific ion channel FluC (127 aa).

A run of 4 helical transmembrane segments spans residues Leu-7 to Val-27, Leu-31 to Gly-51, Leu-68 to Thr-88, and Val-97 to Leu-117. Positions 76 and 79 each coordinate Na(+).

The protein belongs to the fluoride channel Fluc/FEX (TC 1.A.43) family.

Its subcellular location is the cell inner membrane. It carries out the reaction fluoride(in) = fluoride(out). Na(+) is not transported, but it plays an essential structural role and its presence is essential for fluoride channel function. In terms of biological role, fluoride-specific ion channel. Important for reducing fluoride concentration in the cell, thus reducing its toxicity. This chain is Fluoride-specific ion channel FluC, found in Thermus thermophilus (strain ATCC BAA-163 / DSM 7039 / HB27).